The chain runs to 56 residues: Large ribosomal subunit protein bL32 (56 aa).

The segment at 1–26 (MAVQQNKKSRSKRGMRRSHDALSTAQ) is disordered. A compositionally biased stretch (basic residues) spans 7–16 (KKSRSKRGMR).

The protein belongs to the bacterial ribosomal protein bL32 family.

The sequence is that of Large ribosomal subunit protein bL32 from Shewanella denitrificans (strain OS217 / ATCC BAA-1090 / DSM 15013).